The sequence spans 352 residues: Rhodopsin, freshwater form (352 aa).

The Extracellular portion of the chain corresponds to 1–36 (MNGTEGPNFYVPMSNVTGVVRSPFEYPQYYLAEPWA). N-linked (GlcNAc...) asparagine glycans are attached at residues N2 and N15. A helical transmembrane segment spans residues 37-61 (YSALAAYMFFLIIAGFPINFLTLYV). Over 62-73 (TIEHKKLRTPLN) the chain is Cytoplasmic. A helical membrane pass occupies residues 74–98 (YILLNLAVADLFMVFGGFTTTMYTS). Residues 99–113 (MHGYFVFGPTGCNIE) are Extracellular-facing. C110 and C187 form a disulfide bridge. A helical transmembrane segment spans residues 114–133 (GFFATLGGEIALWCLVVLAV). At 134–152 (ERWMVVCKPMSNFRFGENH) the chain is on the cytoplasmic side. Residues 153–176 (AIMGVAFTWVMALACAAPPLFGWS) traverse the membrane as a helical segment. The Extracellular segment spans residues 177–202 (RYIPEGMQCSCGMDHYAPNPETYNES). N200 carries N-linked (GlcNAc...) asparagine glycosylation. The helical transmembrane segment at 203 to 230 (FVIYMFICHFTIPLTVISFCYGRLVCTV) threads the bilayer. The Cytoplasmic segment spans residues 231 to 252 (KEATAQQQESETTQRAEREVTR). Residues 253 to 276 (MVIIMVISFLVCWVPYASVAWYIF) traverse the membrane as a helical segment. At 277-284 (THQGSSFG) the chain is on the extracellular side. A helical transmembrane segment spans residues 285–309 (PIFMTIPAFFAKSSSLYNPLIYICM). K296 is subject to N6-(retinylidene)lysine. The Cytoplasmic portion of the chain corresponds to 310-352 (NKQSRNCMITTLCCGKNPFEEEEGASTTASKTEASSVSSVSPA). C323 is lipidated: S-palmitoyl cysteine. The disordered stretch occupies residues 330–352 (EEEGASTTASKTEASSVSSVSPA). The segment covering 334–352 (ASTTASKTEASSVSSVSPA) has biased composition (low complexity).

The protein belongs to the G-protein coupled receptor 1 family. Opsin subfamily. In terms of processing, phosphorylated on some or all of the serine and threonine residues present in the C-terminal region. In terms of tissue distribution, rod shaped photoreceptor cells which mediates vision in dim light.

Its subcellular location is the membrane. Its function is as follows. Visual pigments such as rhodopsin and porphyropsin are light-absorbing molecules that mediate vision. Rhodopsin consists of an apoprotein, opsin, covalently linked to 11-cis-retinal. This receptor is coupled to the activation of phospholipase C. Porphyropsin consists of opsin covalently linked to 11-cis 3,4-didehydroretinal. The sequence is that of Rhodopsin, freshwater form from Anguilla anguilla (European freshwater eel).